We begin with the raw amino-acid sequence, 347 residues long: METSPISPMNEKNTAQPQQREENAQQILNTAIPFRQRSPGLLPEALKVGVRPDPANQIVETQEIEHPVAGFEGDSDQFQVSTNEMAEHLQASDLWYCPDGSFVKKIIVPGHGLDKPKLGSKCQVLALGFPFGSGMPEGWTELTIGIGQWREKMWGELMEKCLESMRQGEEAKIHLPGSSAPLAKLRLDSFTNGRDSWEMEAMEKEALAKEEHRRGTELFRAGNPQGAARCYGRALRLLLTLPPPGPPERTTLYANLAACQLLLGHPQLAAQSCDRVLEREPGHLKALYRRGVARAALGDLEKATADFKKVLAVDPKNRAAKEELGKVVIQGRKQDAGLARGLRKMFS.

Positions 1–24 (METSPISPMNEKNTAQPQQREENA) are disordered. At threonine 3 the chain carries Phosphothreonine. TPR repeat units lie at residues 208–241 (AKEE…LLTL), 250–283 (TTLY…EPGH), and 284–317 (LKAL…DPKN).

In terms of assembly, forms a ternary complex with CDKN1A/p21 and HSP90AB1/Hsp90.

In terms of biological role, may be involved in response to X-ray. Regulates p21 protein stability by binding to Hsp90 and p21. This Mus musculus (Mouse) protein is FK506-binding protein-like (Fkbpl).